A 342-amino-acid polypeptide reads, in one-letter code: Nicotinate-nucleotide--dimethylbenzimidazole phosphoribosyltransferase (342 aa).

Residue E311 is the Proton acceptor of the active site.

It belongs to the CobT family.

The enzyme catalyses 5,6-dimethylbenzimidazole + nicotinate beta-D-ribonucleotide = alpha-ribazole 5'-phosphate + nicotinate + H(+). Its pathway is nucleoside biosynthesis; alpha-ribazole biosynthesis; alpha-ribazole from 5,6-dimethylbenzimidazole: step 1/2. Its function is as follows. Catalyzes the synthesis of alpha-ribazole-5'-phosphate from nicotinate mononucleotide (NAMN) and 5,6-dimethylbenzimidazole (DMB). This Vibrio vulnificus (strain CMCP6) protein is Nicotinate-nucleotide--dimethylbenzimidazole phosphoribosyltransferase.